A 408-amino-acid polypeptide reads, in one-letter code: Argininosuccinate synthase (408 aa).

8–16 (AYSGGLDTT) provides a ligand contact to ATP. Residue Tyr86 participates in L-citrulline binding. Gly116 is an ATP binding site. Thr118, Asn122, and Asp123 together coordinate L-aspartate. An L-citrulline-binding site is contributed by Asn122. The L-citrulline site is built by Arg126, Ser177, Ser186, Glu263, and Tyr275.

It belongs to the argininosuccinate synthase family. Type 1 subfamily. As to quaternary structure, homotetramer.

It localises to the cytoplasm. It carries out the reaction L-citrulline + L-aspartate + ATP = 2-(N(omega)-L-arginino)succinate + AMP + diphosphate + H(+). It functions in the pathway amino-acid biosynthesis; L-arginine biosynthesis; L-arginine from L-ornithine and carbamoyl phosphate: step 2/3. The chain is Argininosuccinate synthase from Agathobacter rectalis (strain ATCC 33656 / DSM 3377 / JCM 17463 / KCTC 5835 / VPI 0990) (Eubacterium rectale).